A 235-amino-acid chain; its full sequence is Orotidine 5'-phosphate decarboxylase (235 aa).

Substrate contacts are provided by residues Asp17, Lys39, 66 to 75 (DMKLLDIDHT), Thr121, Arg182, Gln191, and Arg212. Residue Lys68 is the Proton donor of the active site.

This sequence belongs to the OMP decarboxylase family. Type 1 subfamily. In terms of assembly, homodimer.

The enzyme catalyses orotidine 5'-phosphate + H(+) = UMP + CO2. It participates in pyrimidine metabolism; UMP biosynthesis via de novo pathway; UMP from orotate: step 2/2. In terms of biological role, catalyzes the decarboxylation of orotidine 5'-monophosphate (OMP) to uridine 5'-monophosphate (UMP). The polypeptide is Orotidine 5'-phosphate decarboxylase (Bartonella bacilliformis).